Consider the following 861-residue polypeptide: DNA topoisomerase 1 (861 aa).

The region spanning Lys-3–Ile-141 is the Toprim domain. The Mg(2+) site is built by Glu-9 and Asp-110. The region spanning Asn-157 to Leu-572 is the Topo IA-type catalytic domain. The interval Ser-191–Gln-196 is interaction with DNA. Tyr-318 functions as the O-(5'-phospho-DNA)-tyrosine intermediate in the catalytic mechanism. 3 C4-type zinc fingers span residues Cys-596–Cys-628, Cys-658–Cys-685, and Cys-707–Cys-732.

It belongs to the type IA topoisomerase family. As to quaternary structure, monomer. Mg(2+) is required as a cofactor.

It catalyses the reaction ATP-independent breakage of single-stranded DNA, followed by passage and rejoining.. Releases the supercoiling and torsional tension of DNA, which is introduced during the DNA replication and transcription, by transiently cleaving and rejoining one strand of the DNA duplex. Introduces a single-strand break via transesterification at a target site in duplex DNA. The scissile phosphodiester is attacked by the catalytic tyrosine of the enzyme, resulting in the formation of a DNA-(5'-phosphotyrosyl)-enzyme intermediate and the expulsion of a 3'-OH DNA strand. The free DNA strand then undergoes passage around the unbroken strand, thus removing DNA supercoils. Finally, in the religation step, the DNA 3'-OH attacks the covalent intermediate to expel the active-site tyrosine and restore the DNA phosphodiester backbone. This is DNA topoisomerase 1 from Buchnera aphidicola subsp. Acyrthosiphon pisum (strain APS) (Acyrthosiphon pisum symbiotic bacterium).